The chain runs to 304 residues: UDP-3-O-acyl-N-acetylglucosamine deacetylase (304 aa).

Zn(2+) contacts are provided by His78, His237, and Asp241. Catalysis depends on His264, which acts as the Proton donor.

The protein belongs to the LpxC family. Zn(2+) serves as cofactor.

The enzyme catalyses a UDP-3-O-[(3R)-3-hydroxyacyl]-N-acetyl-alpha-D-glucosamine + H2O = a UDP-3-O-[(3R)-3-hydroxyacyl]-alpha-D-glucosamine + acetate. The protein operates within glycolipid biosynthesis; lipid IV(A) biosynthesis; lipid IV(A) from (3R)-3-hydroxytetradecanoyl-[acyl-carrier-protein] and UDP-N-acetyl-alpha-D-glucosamine: step 2/6. Functionally, catalyzes the hydrolysis of UDP-3-O-myristoyl-N-acetylglucosamine to form UDP-3-O-myristoylglucosamine and acetate, the committed step in lipid A biosynthesis. This chain is UDP-3-O-acyl-N-acetylglucosamine deacetylase, found in Polynucleobacter necessarius subsp. necessarius (strain STIR1).